The sequence spans 230 residues: Isoprenyl transferase (230 aa).

D14 is a catalytic residue. Residue D14 coordinates Mg(2+). Substrate contacts are provided by residues 15–18 (GNGR), W19, R27, H31, and 59–61 (STE). The active-site Proton acceptor is N62. Substrate-binding positions include W63, R65, R175, and 181-183 (RIS). Residue E194 participates in Mg(2+) binding.

It belongs to the UPP synthase family. As to quaternary structure, homodimer. Requires Mg(2+) as cofactor.

Catalyzes the condensation of isopentenyl diphosphate (IPP) with allylic pyrophosphates generating different type of terpenoids. This Fusobacterium nucleatum subsp. nucleatum (strain ATCC 25586 / DSM 15643 / BCRC 10681 / CIP 101130 / JCM 8532 / KCTC 2640 / LMG 13131 / VPI 4355) protein is Isoprenyl transferase.